The following is a 472-amino-acid chain: Sulfate adenylyltransferase subunit 1 (472 aa).

Positions 24 to 240 (KSLLRFLTCG…ENAEVGTRDL (217 aa)) constitute a tr-type G domain. The G1 stretch occupies residues 33 to 40 (GSVDDGKS). Residue 33-40 (GSVDDGKS) coordinates GTP. The tract at residues 91 to 95 (GITID) is G2. The segment at 112 to 115 (DTPG) is G3. Residues 112-116 (DTPGH) and 167-170 (NKMD) each bind GTP. Residues 167–170 (NKMD) are G4. Positions 204 to 206 (SAL) are G5.

Belongs to the TRAFAC class translation factor GTPase superfamily. Classic translation factor GTPase family. CysN/NodQ subfamily. Heterodimer composed of CysD, the smaller subunit, and CysN.

It carries out the reaction sulfate + ATP + H(+) = adenosine 5'-phosphosulfate + diphosphate. Its pathway is sulfur metabolism; hydrogen sulfide biosynthesis; sulfite from sulfate: step 1/3. With CysD forms the ATP sulfurylase (ATPS) that catalyzes the adenylation of sulfate producing adenosine 5'-phosphosulfate (APS) and diphosphate, the first enzymatic step in sulfur assimilation pathway. APS synthesis involves the formation of a high-energy phosphoric-sulfuric acid anhydride bond driven by GTP hydrolysis by CysN coupled to ATP hydrolysis by CysD. This Tolumonas auensis (strain DSM 9187 / NBRC 110442 / TA 4) protein is Sulfate adenylyltransferase subunit 1.